Consider the following 252-residue polypeptide: Gastrula zinc finger protein XlCGF28.1 (252 aa).

9 consecutive C2H2-type zinc fingers follow at residues 6–28 (FTCN…LRSH), 34–56 (FTCS…FRGH), 62–84 (SACT…IRSH), 90–112 (YTCT…VRSH), 118–140 (FKCT…LRFH), 146–168 (TTCS…FRVH), 174–196 (FTCT…SYLH), 202–224 (YTCT…SYLH), and 230–252 (FTCT…SHTH).

The protein belongs to the krueppel C2H2-type zinc-finger protein family.

Its subcellular location is the nucleus. Functionally, may be involved in transcriptional regulation. This is Gastrula zinc finger protein XlCGF28.1 from Xenopus laevis (African clawed frog).